A 459-amino-acid chain; its full sequence is Trichothecene 3-O-acetyltransferase TRI101 (459 aa).

D218 and I221 together coordinate Ca(2+). CoA-binding positions include K253, 266–269 (FVST), D302, Q318, and R343. D376 contacts Ca(2+). 2 residues coordinate CoA: S386 and K390. E449 contributes to the Ca(2+) binding site.

This sequence belongs to the trichothecene 3-O-acetyltransferase family.

It functions in the pathway sesquiterpene biosynthesis; trichothecene biosynthesis. Its function is as follows. 3-O-acetyltransferase involved in the biosynthesis of trichothecenes, a very large family of chemically related bicyclic sesquiterpene compounds acting as mycotoxins, including T2-toxin. The biosynthesis of trichothecenes begins with the cyclization of farnesyl diphosphate to trichodiene and is catalyzed by the trichodiene synthase TRI5. Trichodiene undergoes a series of oxygenations catalyzed by the cytochrome P450 monooxygenase TRI4. TRI4 controls the addition of four oxygens at C-2, C-3, C-11, and the C-12, C-13-epoxide to form the intermediate isotrichotriol. Isotrichotriol then undergoes a non-enzymatic isomerization and cyclization to form isotrichodermol. During this process, the oxygen at the C-2 position becomes the pyran ring oxygen and the hydroxyl group at C-11 is lost. More complex type A trichothecenes are built by modifying isotrichodermol through a series of paired hydroxylation and acetylation or acylation steps. Isotrichodermol is converted to isotrichodermin by the acetyltransferase TRI101. TRI101 encodes a C-3 transacetylase that acts as a self-protection or resistance factor during biosynthesis and that the presence of a free C-3 hydroxyl group is a key component of Fusarium trichothecene phytotoxicity. A second hydroxyl group is added to C-15 by the trichothecene C-15 hydroxylase TRI11, producing 15-decalonectrin, which is then acetylated by TRI3, producing calonectrin. A third hydroxyl group is added at C-4 by the cytochrome P450 monooxygenase TRI13, converting calonectrin to 3,15-diacetoxyspirpenol, which is subsequently acetylated bythe acetyltransferase TRI7. A fourth hydroxyl group is added to C-8 by the cytochrome P450 monooxygenase TRI1, followed by the addition of an isovaleryl moiety by TRI16. Finally, the acetyl group is removed from the C-3 position by the trichothecene C-3 esterase TRI8 to produce T-2 toxin. The sequence is that of Trichothecene 3-O-acetyltransferase TRI101 from Fusarium sporotrichioides.